The sequence spans 89 residues: Co-chaperonin GroES (89 aa).

It belongs to the GroES chaperonin family. As to quaternary structure, heptamer of 7 subunits arranged in a ring. Interacts with the chaperonin GroEL.

It is found in the cytoplasm. Functionally, together with the chaperonin GroEL, plays an essential role in assisting protein folding. The GroEL-GroES system forms a nano-cage that allows encapsulation of the non-native substrate proteins and provides a physical environment optimized to promote and accelerate protein folding. GroES binds to the apical surface of the GroEL ring, thereby capping the opening of the GroEL channel. This is Co-chaperonin GroES from Pseudothermotoga lettingae (strain ATCC BAA-301 / DSM 14385 / NBRC 107922 / TMO) (Thermotoga lettingae).